Here is a 339-residue protein sequence, read N- to C-terminus: tRNA pseudouridine synthase B (339 aa).

Asp40 (nucleophile) is an active-site residue. One can recognise an RPE1 insert domain in the interval Phe262 to Ser307.

Belongs to the pseudouridine synthase TruB family. Type 1 subfamily.

It carries out the reaction uridine(55) in tRNA = pseudouridine(55) in tRNA. Its function is as follows. Responsible for synthesis of pseudouridine from uracil-55 in the psi GC loop of transfer RNAs. This chain is tRNA pseudouridine synthase B, found in Rickettsia felis (strain ATCC VR-1525 / URRWXCal2) (Rickettsia azadi).